A 567-amino-acid polypeptide reads, in one-letter code: D-lactate dehydrogenase [cytochrome], mitochondrial (567 aa).

The N-terminal 56 residues, 1-56 (MAFASKFARSKTILSFLRPCRQLHSTPKSTGDVTVLSPVKGRRRLPTCWSSSLFPL), are a transit peptide targeting the mitochondrion. The 178-residue stretch at 142-319 (AVNIPDVVVF…TEITLRLQKI (178 aa)) folds into the FAD-binding PCMH-type domain.

It belongs to the FAD-binding oxidoreductase/transferase type 4 family. In terms of assembly, homodimer. Requires FAD as cofactor. Expressed in leaves, stems, flowers and roots.

Its subcellular location is the mitochondrion. The catalysed reaction is (R)-lactate + 2 Fe(III)-[cytochrome c] = 2 Fe(II)-[cytochrome c] + pyruvate + 2 H(+). Inhibited by cyanide ions. Catalyzes the stereospecific oxidation of D-lactate to pyruvate. Involved in the detoxification of methylglyoxal and D-lactate, but probably not involved in the metabolization of glycolate. The sequence is that of D-lactate dehydrogenase [cytochrome], mitochondrial from Arabidopsis thaliana (Mouse-ear cress).